The chain runs to 556 residues: DNA ligase B (556 aa).

K122 functions as the N6-AMP-lysine intermediate in the catalytic mechanism.

This sequence belongs to the NAD-dependent DNA ligase family. LigB subfamily.

The catalysed reaction is NAD(+) + (deoxyribonucleotide)n-3'-hydroxyl + 5'-phospho-(deoxyribonucleotide)m = (deoxyribonucleotide)n+m + AMP + beta-nicotinamide D-nucleotide.. Its function is as follows. Catalyzes the formation of phosphodiester linkages between 5'-phosphoryl and 3'-hydroxyl groups in double-stranded DNA using NAD as a coenzyme and as the energy source for the reaction. This is DNA ligase B from Enterobacter sp. (strain 638).